Consider the following 174-residue polypeptide: Flavodoxin (174 aa).

Residues 4 to 165 enclose the Flavodoxin-like domain; the sequence is VGLFYGSDTG…RVEKWCKQIY (162 aa).

The protein belongs to the flavodoxin family. The cofactor is FMN.

Its function is as follows. Low-potential electron donor to a number of redox enzymes. This is Flavodoxin (fldA) from Haemophilus influenzae (strain ATCC 51907 / DSM 11121 / KW20 / Rd).